The chain runs to 342 residues: Glyceraldehyde-3-phosphate dehydrogenase (342 aa).

Residues 12 to 13 (RI), aspartate 34, lysine 78, and threonine 120 contribute to the NAD(+) site. Residues 151–153 (SCT) and threonine 182 contribute to the D-glyceraldehyde 3-phosphate site. The active-site Nucleophile is the cysteine 152. Asparagine 183 contacts NAD(+). D-glyceraldehyde 3-phosphate-binding positions include arginine 197, 210 to 211 (TG), and arginine 233. Position 322 (asparagine 322) interacts with NAD(+).

The protein belongs to the glyceraldehyde-3-phosphate dehydrogenase family. In terms of assembly, homotetramer.

It localises to the cytoplasm. The catalysed reaction is D-glyceraldehyde 3-phosphate + phosphate + NAD(+) = (2R)-3-phospho-glyceroyl phosphate + NADH + H(+). It participates in carbohydrate degradation; glycolysis; pyruvate from D-glyceraldehyde 3-phosphate: step 1/5. Functionally, catalyzes the oxidative phosphorylation of glyceraldehyde 3-phosphate (G3P) to 1,3-bisphosphoglycerate (BPG) using the cofactor NAD. The first reaction step involves the formation of a hemiacetal intermediate between G3P and a cysteine residue, and this hemiacetal intermediate is then oxidized to a thioester, with concomitant reduction of NAD to NADH. The reduced NADH is then exchanged with the second NAD, and the thioester is attacked by a nucleophilic inorganic phosphate to produce BPG. This Aquifex aeolicus (strain VF5) protein is Glyceraldehyde-3-phosphate dehydrogenase (gap).